Reading from the N-terminus, the 381-residue chain is Pentatricopeptide repeat-containing protein 2, mitochondrial (381 aa).

A PPR repeat occupies 159 to 193 (TSFNILMDMLFTKGKYERALQVLIEMKNQDVRFSK). Ser-375 carries the post-translational modification Phosphoserine.

This sequence belongs to the PTCD2 family. As to expression, high expression in heart and liver and low expression in kidney, brain and testis.

It localises to the mitochondrion. Its function is as follows. Involved in mitochondrial RNA maturation and mitochondrial respiratory chain function. This is Pentatricopeptide repeat-containing protein 2, mitochondrial (Ptcd2) from Mus musculus (Mouse).